The sequence spans 121 residues: Nitrogenase-stabilizing/protective protein NifW (121 aa).

The protein belongs to the NifW family. Homotrimer; associates with NifD.

May protect the nitrogenase Fe-Mo protein from oxidative damage. In Leptothrix cholodnii (strain ATCC 51168 / LMG 8142 / SP-6) (Leptothrix discophora (strain SP-6)), this protein is Nitrogenase-stabilizing/protective protein NifW.